The chain runs to 325 residues: uncharacterized protein (325 aa).

This sequence belongs to the mgp1/MG371 family.

This is an uncharacterized protein from Mycoplasma pneumoniae (strain ATCC 29342 / M129 / Subtype 1) (Mycoplasmoides pneumoniae).